A 479-amino-acid polypeptide reads, in one-letter code: GTPase Der (479 aa).

EngA-type G domains are found at residues 3–166 (PVVA…AEEY) and 192–365 (LKLA…ASAT). Residues 9-16 (GRPNVGKS), 56-60 (DTGGI), 118-121 (NKID), 198-205 (GRPNVGKS), 245-249 (DTAGV), and 310-313 (NKWD) each bind GTP. A KH-like domain is found at 366–450 (QRISTSKLTK…PIKVEFREPV (85 aa)).

Belongs to the TRAFAC class TrmE-Era-EngA-EngB-Septin-like GTPase superfamily. EngA (Der) GTPase family. As to quaternary structure, associates with the 50S ribosomal subunit.

Functionally, GTPase that plays an essential role in the late steps of ribosome biogenesis. This chain is GTPase Der, found in Idiomarina loihiensis (strain ATCC BAA-735 / DSM 15497 / L2-TR).